Consider the following 715-residue polypeptide: Polyribonucleotide nucleotidyltransferase (715 aa).

2 residues coordinate Mg(2+): Asp-485 and Asp-491. Positions 552–611 (PRIHTMKIDPKKIKDVIGKGGAVIRALTEETGTSIDIDDDGTVKIAATDNNAAKAVMARI) constitute a KH domain. Residues 621–689 (NAIYKGKVTR…RQNRIRLTMK (69 aa)) enclose the S1 motif domain. The segment at 695 to 715 (TPVAENVTEEAEVSSEQQAEI) is disordered.

The protein belongs to the polyribonucleotide nucleotidyltransferase family. Component of the RNA degradosome, which is a multiprotein complex involved in RNA processing and mRNA degradation. The cofactor is Mg(2+).

It is found in the cytoplasm. The catalysed reaction is RNA(n+1) + phosphate = RNA(n) + a ribonucleoside 5'-diphosphate. Its function is as follows. Involved in mRNA degradation. Catalyzes the phosphorolysis of single-stranded polyribonucleotides processively in the 3'- to 5'-direction. The protein is Polyribonucleotide nucleotidyltransferase of Actinobacillus pleuropneumoniae serotype 7 (strain AP76).